The chain runs to 534 residues: GMP synthase [glutamine-hydrolyzing] (534 aa).

Residues 4-202 (KILILDFGSQ…VLEIAKAQPD (199 aa)) form the Glutamine amidotransferase type-1 domain. The Nucleophile role is filled by C81. Residues H176 and E178 contribute to the active site. The GMPS ATP-PPase domain maps to 203 to 402 (WVMKDHVAEA…LGLPHDMVYR (200 aa)). ATP is bound at residue 230 to 236 (SGGVDSS).

As to quaternary structure, homodimer.

It carries out the reaction XMP + L-glutamine + ATP + H2O = GMP + L-glutamate + AMP + diphosphate + 2 H(+). It participates in purine metabolism; GMP biosynthesis; GMP from XMP (L-Gln route): step 1/1. Catalyzes the synthesis of GMP from XMP. The chain is GMP synthase [glutamine-hydrolyzing] from Methylibium petroleiphilum (strain ATCC BAA-1232 / LMG 22953 / PM1).